The primary structure comprises 460 residues: GTPase Der (460 aa).

EngA-type G domains are found at residues 3–167 (FTIA…PEPT) and 189–364 (IRVA…AIWN). Residues 9–16 (GRPNVGKS), 56–60 (DTAGL), 119–122 (NKSE), 195–202 (GRPNAGKS), 242–246 (DTAGL), and 307–310 (NKWD) each bind GTP. Residues 365-449 (RRVPTAALNR…PIRITLREKA (85 aa)) enclose the KH-like domain.

Belongs to the TRAFAC class TrmE-Era-EngA-EngB-Septin-like GTPase superfamily. EngA (Der) GTPase family. As to quaternary structure, associates with the 50S ribosomal subunit.

Functionally, GTPase that plays an essential role in the late steps of ribosome biogenesis. This chain is GTPase Der, found in Nitrobacter hamburgensis (strain DSM 10229 / NCIMB 13809 / X14).